The following is a 200-amino-acid chain: Putative pseudouridine methyltransferase (200 aa).

Residues methionine 133 and cysteine 187 each coordinate S-adenosyl-L-methionine.

This sequence belongs to the methyltransferase superfamily. TrmY family.

The protein localises to the cytoplasm. The sequence is that of Putative pseudouridine methyltransferase from Alcanivorax borkumensis (strain ATCC 700651 / DSM 11573 / NCIMB 13689 / SK2).